A 493-amino-acid chain; its full sequence is MSLLKMEYNLYAELKKMTCGQPLSLFNEDGDFVEVEPGSSFKFLIPKGFYASPSVKTSLVFETLTTTDNKITSINPTNAPKLYPLQRKVVSEVVSNMRKMIESKRPLYITLHLACGFGKTITTCYLMATHGRKTVICVPNKMLIHQWKTQVEAVGLEHKISIDGVSSLLKELKTQSPDVLIVVSRHLTNDAFCKYINKHYDLFILDESHTYNLMNNTAVTRFLAYYPPMMCYFLTATPRPANRIYCNSIINIAKLSDLKKTIYAVDSFFEPYSTDNIRHMVKRLDGPSNKYHIYTEKLLSVDEPRNQLILNTLVEEFKSGTINRILVITKLREHMVLFYKRLLDLFGPEVVFIGDAQNRRTPDMVKSIKELNRFIFVSTLFYSGTGLDIPSLDSLFICSAVINNMQIEQLLGRVCRETELLDRTVYVFPNTSIKEIKYMIGNFMQRIISLSVDKLGFKQKSYRKHQESDPTSVCTTSSREERVLNRIFNSQNR.

A Helicase ATP-binding domain is found at M100–S256. L113–T120 lines the ATP pocket. A DESH box motif is present at residues D206–H209.

This sequence belongs to the helicase family. Poxviruses subfamily. As to quaternary structure, interacts with G2. Might be part of a transcription complex composed at least of G2, A18, and H5.

Its subcellular location is the virion. Functionally, DNA helicase which seems to act as a postreplicative transcription termination factor. Involved in ATP-dependent release of nascent RNA. Forms a stable complex with single-stranded DNA, and to a lesser extent RNA. The chain is Transcript termination protein A18 from Vaccinia virus (strain Tian Tan) (VACV).